We begin with the raw amino-acid sequence, 112 residues long: Putative pterin-4-alpha-carbinolamine dehydratase (112 aa).

Belongs to the pterin-4-alpha-carbinolamine dehydratase family.

It carries out the reaction (4aS,6R)-4a-hydroxy-L-erythro-5,6,7,8-tetrahydrobiopterin = (6R)-L-erythro-6,7-dihydrobiopterin + H2O. The protein is Putative pterin-4-alpha-carbinolamine dehydratase of Shewanella baltica (strain OS223).